A 275-amino-acid polypeptide reads, in one-letter code: Methylglyoxal reductase DkgA (275 aa).

Catalysis depends on Tyr51, which acts as the Proton donor. His107 contacts substrate. Residue Ser187–Asn241 participates in NADP(+) binding.

This sequence belongs to the aldo/keto reductase family. As to quaternary structure, monomer.

The protein resides in the cytoplasm. The enzyme catalyses hydroxyacetone + NADP(+) = methylglyoxal + NADPH + H(+). The catalysed reaction is a primary alcohol + NADP(+) = an aldehyde + NADPH + H(+). It carries out the reaction 2-dehydro-L-idonate + NADP(+) = 2,5-didehydro-D-gluconate + NADPH + H(+). Functionally, aldo-keto reductase that significantly contributes to cellular methylglyoxal detoxification by catalyzing the NADPH-dependent conversion of methylglyoxal to acetol. It also exhibits fairly high activity with glyoxal. Shows broad specificity and can use aromatic aldehydes such as 4-nitrobenzaldehyde, 3-nitrobenzaldehyde and benzaldehyde, and phenylglyoxal. Shows beta-keto ester reductase activity toward ethyl acetoacetate and a variety of 2-substituted derivatives. Also catalyzes the reduction of 2,5-diketo-D-gluconic acid (25DKG) to 2-keto-L-gulonic acid (2KLG) and could be involved in ketogluconate metabolism. However, the specific activity of the enzyme toward 2,5-diketo-D-gluconate was reported to be almost 400-fold lower than its activity toward methylglyoxal. Can catalyze in vitro the NADPH-dependent reduction of furfural, a natural product of lignocellulosic decomposition, to the less toxic product, furfuryl alcohol. However, it is unlikely that furfural is a physiological substrate. This Escherichia coli (strain K12) protein is Methylglyoxal reductase DkgA.